We begin with the raw amino-acid sequence, 199 residues long: dITP/XTP pyrophosphatase (199 aa).

7 to 12 (TGNKGK) contributes to the substrate binding site. Residue aspartate 71 is the Proton acceptor of the active site. Residue aspartate 71 participates in Mg(2+) binding. Substrate contacts are provided by residues alanine 72, 154–157 (FGYD), lysine 177, and 182–183 (HR).

The protein belongs to the HAM1 NTPase family. Homodimer. Requires Mg(2+) as cofactor.

The catalysed reaction is XTP + H2O = XMP + diphosphate + H(+). The enzyme catalyses dITP + H2O = dIMP + diphosphate + H(+). It carries out the reaction ITP + H2O = IMP + diphosphate + H(+). In terms of biological role, pyrophosphatase that catalyzes the hydrolysis of nucleoside triphosphates to their monophosphate derivatives, with a high preference for the non-canonical purine nucleotides XTP (xanthosine triphosphate), dITP (deoxyinosine triphosphate) and ITP. Seems to function as a house-cleaning enzyme that removes non-canonical purine nucleotides from the nucleotide pool, thus preventing their incorporation into DNA/RNA and avoiding chromosomal lesions. The sequence is that of dITP/XTP pyrophosphatase from Bdellovibrio bacteriovorus (strain ATCC 15356 / DSM 50701 / NCIMB 9529 / HD100).